A 203-amino-acid chain; its full sequence is Histidine biosynthesis bifunctional protein HisIE (203 aa).

The interval 1 to 108 is phosphoribosyl-AMP cyclohydrolase; that stretch reads MELDFDKMNG…GEKNEEPVMF (108 aa). The phosphoribosyl-ATP pyrophosphohydrolase stretch occupies residues 109–203; that stretch reads LKALQDFIDK…ERHSSTWKKH (95 aa).

In the N-terminal section; belongs to the PRA-CH family. This sequence in the C-terminal section; belongs to the PRA-PH family.

The protein localises to the cytoplasm. The enzyme catalyses 1-(5-phospho-beta-D-ribosyl)-ATP + H2O = 1-(5-phospho-beta-D-ribosyl)-5'-AMP + diphosphate + H(+). The catalysed reaction is 1-(5-phospho-beta-D-ribosyl)-5'-AMP + H2O = 1-(5-phospho-beta-D-ribosyl)-5-[(5-phospho-beta-D-ribosylamino)methylideneamino]imidazole-4-carboxamide. It participates in amino-acid biosynthesis; L-histidine biosynthesis; L-histidine from 5-phospho-alpha-D-ribose 1-diphosphate: step 2/9. Its pathway is amino-acid biosynthesis; L-histidine biosynthesis; L-histidine from 5-phospho-alpha-D-ribose 1-diphosphate: step 3/9. This chain is Histidine biosynthesis bifunctional protein HisIE, found in Bacteroides thetaiotaomicron (strain ATCC 29148 / DSM 2079 / JCM 5827 / CCUG 10774 / NCTC 10582 / VPI-5482 / E50).